Reading from the N-terminus, the 241-residue chain is Small ribosomal subunit protein bS6 (241 aa).

Residues 97-108 show a composition bias toward basic residues; it reads KPKIRERNRKYT. Disordered regions lie at residues 97–187 and 199–241; these read KPKI…HREN and NKNH…QSSN. A compositionally biased stretch (basic and acidic residues) spans 109–118; the sequence is PRRDRFDKPN. Low complexity-rich tracts occupy residues 130–151, 161–180, and 199–210; these read QDQQ…QTSQ, DDFQ…QQNQ, and NKNHQNQTSQTQ.

Belongs to the bacterial ribosomal protein bS6 family.

Functionally, binds together with bS18 to 16S ribosomal RNA. This chain is Small ribosomal subunit protein bS6, found in Mesomycoplasma hyopneumoniae (strain 7448) (Mycoplasma hyopneumoniae).